The sequence spans 324 residues: Polyphosphate glucokinase (324 aa).

The tract at residues 53–79 (TSTDATADTPRTSPPSDTAGTTSRHRG) is disordered. The span at 62–74 (PRTSPPSDTAGTT) shows a compositional bias: polar residues. Residue 83 to 88 (DIGGSS) participates in ATP binding.

Belongs to the ROK (NagC/XylR) family. In terms of assembly, homodimer.

The catalysed reaction is [phosphate](n) + D-glucose = [phosphate](n-1) + D-glucose 6-phosphate + H(+). It carries out the reaction D-glucose + ATP = D-glucose 6-phosphate + ADP + H(+). In terms of biological role, catalyzes the phosphorylation of glucose using polyphosphate or ATP as the phosphoryl donor. This chain is Polyphosphate glucokinase (ppgK), found in Mycobacterium leprae (strain TN).